Consider the following 164-residue polypeptide: MRALGIDPGTATMGWGVVERDGGVLRLVDVGALTTPAGMPQPERLLQLYNGLRAIIERLQPDTAAVEELFFGKNVNTALTVGQARGVALLALAQAGIPVYEYKPTAVKQAVAGYGGADKRQMQEMVRLTLGLATVPRPDDAADALAIAICHAYTAPTLQRFGVS.

Active-site residues include Asp7, Glu67, and Asp140. 3 residues coordinate Mg(2+): Asp7, Glu67, and Asp140.

The protein belongs to the RuvC family. In terms of assembly, homodimer which binds Holliday junction (HJ) DNA. The HJ becomes 2-fold symmetrical on binding to RuvC with unstacked arms; it has a different conformation from HJ DNA in complex with RuvA. In the full resolvosome a probable DNA-RuvA(4)-RuvB(12)-RuvC(2) complex forms which resolves the HJ. Mg(2+) is required as a cofactor.

Its subcellular location is the cytoplasm. The enzyme catalyses Endonucleolytic cleavage at a junction such as a reciprocal single-stranded crossover between two homologous DNA duplexes (Holliday junction).. The RuvA-RuvB-RuvC complex processes Holliday junction (HJ) DNA during genetic recombination and DNA repair. Endonuclease that resolves HJ intermediates. Cleaves cruciform DNA by making single-stranded nicks across the HJ at symmetrical positions within the homologous arms, yielding a 5'-phosphate and a 3'-hydroxyl group; requires a central core of homology in the junction. The consensus cleavage sequence is 5'-(A/T)TT(C/G)-3'. Cleavage occurs on the 3'-side of the TT dinucleotide at the point of strand exchange. HJ branch migration catalyzed by RuvA-RuvB allows RuvC to scan DNA until it finds its consensus sequence, where it cleaves and resolves the cruciform DNA. This chain is Crossover junction endodeoxyribonuclease RuvC, found in Chloroflexus aggregans (strain MD-66 / DSM 9485).